Consider the following 414-residue polypeptide: MYRRSVGVLFVGRNTRWISSTIRCGTSATRPIRSNALNTDSDNASVRVPVGNSTEVENATSQLTGTSGKRRKGNRKRITEFKDALNLGPSFADFVSGKASKMILDPLEKARQNTEEAKKLPRWLKVPIPKGTNYHKLKGDVKELGLSTVCEEARCPNIGECWGGKDKSKATATIMLLGDTCTRGCRFCSVKTNRTPSKPDPMEPENTAEAIKRWGLGYVVLTTVDRDDLVDGGANHLAETVRKIKQKAPNTLVETLSGDFRGDLKMVDIMAQCGLDVYAHNLETVESLTPHVRDRRATYRQSLSVLERAKATVPSLITKTSIMLGLGETDEQITQTLKDLRNIQCDVVTFGQYMRPTKRHMKVVEYVKPEKFDYWKERALEMGFLYCASGPLVRSSYKAGEAFIENVLKKRNMK.

Residues 1 to 18 constitute a mitochondrion transit peptide; it reads MYRRSVGVLFVGRNTRWI. Polar residues predominate over residues 51–67; sequence GNSTEVENATSQLTGTS. Positions 51 to 75 are disordered; it reads GNSTEVENATSQLTGTSGKRRKGNR. 7 residues coordinate [4Fe-4S] cluster: cysteine 150, cysteine 155, cysteine 161, cysteine 181, cysteine 185, cysteine 188, and serine 396. Positions 164 to 385 constitute a Radical SAM core domain; it reads GKDKSKATAT…KERALEMGFL (222 aa).

This sequence belongs to the radical SAM superfamily. Lipoyl synthase family. It depends on [4Fe-4S] cluster as a cofactor.

The protein localises to the mitochondrion. It carries out the reaction [[Fe-S] cluster scaffold protein carrying a second [4Fe-4S](2+) cluster] + N(6)-octanoyl-L-lysyl-[protein] + 2 oxidized [2Fe-2S]-[ferredoxin] + 2 S-adenosyl-L-methionine + 4 H(+) = [[Fe-S] cluster scaffold protein] + N(6)-[(R)-dihydrolipoyl]-L-lysyl-[protein] + 4 Fe(3+) + 2 hydrogen sulfide + 2 5'-deoxyadenosine + 2 L-methionine + 2 reduced [2Fe-2S]-[ferredoxin]. It participates in protein modification; protein lipoylation via endogenous pathway; protein N(6)-(lipoyl)lysine from octanoyl-[acyl-carrier-protein]: step 2/2. Catalyzes the radical-mediated insertion of two sulfur atoms into the C-6 and C-8 positions of the octanoyl moiety bound to the lipoyl domains of lipoate-dependent enzymes, thereby converting the octanoylated domains into lipoylated derivatives. The sequence is that of Lipoyl synthase, mitochondrial from Saccharomyces cerevisiae (strain RM11-1a) (Baker's yeast).